The chain runs to 57 residues: Large ribosomal subunit protein bL32 (57 aa).

Residues 1–16 (MAVQKSRKTRSKRGMR) are compositionally biased toward basic residues. The interval 1–45 (MAVQKSRKTRSKRGMRRSHDALTAPAQLSVDATSGETHRRHHMTA) is disordered.

It belongs to the bacterial ribosomal protein bL32 family.

The protein is Large ribosomal subunit protein bL32 of Psychromonas ingrahamii (strain DSM 17664 / CCUG 51855 / 37).